The chain runs to 221 residues: Late embryogenesis abundant protein, group 3 (221 aa).

A disordered region spans residues 1–221; sequence MASHQDKASY…KDSSTITRDH (221 aa). The segment covering 33–42 has biased composition (basic and acidic residues); it reads TAQHAKDRAA. A compositionally biased stretch (low complexity) spans 43–52; it reads DAAGHAAGKG. Composition is skewed to basic and acidic residues over residues 53-63 and 72-147; these read QDAKEATKQKA and KKTD…KQKA. Positions 212 to 221 are enriched in polar residues; it reads KDSSTITRDH.

The protein belongs to the LEA type 4 family.

The protein is Late embryogenesis abundant protein, group 3 (MGL3) of Zea mays (Maize).